Reading from the N-terminus, the 511-residue chain is Maturase K (511 aa).

Belongs to the intron maturase 2 family. MatK subfamily.

The protein resides in the plastid. The protein localises to the chloroplast. Functionally, usually encoded in the trnK tRNA gene intron. Probably assists in splicing its own and other chloroplast group II introns. The sequence is that of Maturase K from Hordeum vulgare (Barley).